The primary structure comprises 218 residues: Probable transaldolase (218 aa).

The Schiff-base intermediate with substrate role is filled by K84.

It belongs to the transaldolase family. Type 3B subfamily.

It localises to the cytoplasm. It catalyses the reaction D-sedoheptulose 7-phosphate + D-glyceraldehyde 3-phosphate = D-erythrose 4-phosphate + beta-D-fructose 6-phosphate. It functions in the pathway carbohydrate degradation; pentose phosphate pathway; D-glyceraldehyde 3-phosphate and beta-D-fructose 6-phosphate from D-ribose 5-phosphate and D-xylulose 5-phosphate (non-oxidative stage): step 2/3. In terms of biological role, transaldolase is important for the balance of metabolites in the pentose-phosphate pathway. This is Probable transaldolase from Bartonella henselae (strain ATCC 49882 / DSM 28221 / CCUG 30454 / Houston 1) (Rochalimaea henselae).